The chain runs to 374 residues: Chaperone protein DnaJ (374 aa).

One can recognise a J domain in the interval D3–G67. The disordered stretch occupies residues G99–L118. Positions Q103–G115 are enriched in low complexity. A CR-type zinc finger spans residues G132–R214. Zn(2+) contacts are provided by C145, C148, C162, C165, C188, C191, C202, and C205. 4 CXXCXGXG motif repeats span residues C145 to G152, C162 to G169, C188 to G195, and C202 to G209.

This sequence belongs to the DnaJ family. Homodimer. Requires Zn(2+) as cofactor.

It localises to the cytoplasm. In terms of biological role, participates actively in the response to hyperosmotic and heat shock by preventing the aggregation of stress-denatured proteins and by disaggregating proteins, also in an autonomous, DnaK-independent fashion. Unfolded proteins bind initially to DnaJ; upon interaction with the DnaJ-bound protein, DnaK hydrolyzes its bound ATP, resulting in the formation of a stable complex. GrpE releases ADP from DnaK; ATP binding to DnaK triggers the release of the substrate protein, thus completing the reaction cycle. Several rounds of ATP-dependent interactions between DnaJ, DnaK and GrpE are required for fully efficient folding. Also involved, together with DnaK and GrpE, in the DNA replication of plasmids through activation of initiation proteins. This chain is Chaperone protein DnaJ, found in Prochlorococcus marinus subsp. pastoris (strain CCMP1986 / NIES-2087 / MED4).